A 199-amino-acid polypeptide reads, in one-letter code: GTP cyclohydrolase-2 (199 aa).

49–53 (RIHSE) lines the GTP pocket. The Zn(2+) site is built by Cys-54, Cys-65, and Cys-67. Residues Gln-70, 92-94 (EGR), and Thr-114 each bind GTP. Asp-126 (proton acceptor) is an active-site residue. Arg-128 (nucleophile) is an active-site residue. GTP-binding residues include Thr-149 and Lys-154.

This sequence belongs to the GTP cyclohydrolase II family. As to quaternary structure, homodimer. The cofactor is Zn(2+).

It carries out the reaction GTP + 4 H2O = 2,5-diamino-6-hydroxy-4-(5-phosphoribosylamino)-pyrimidine + formate + 2 phosphate + 3 H(+). The protein operates within cofactor biosynthesis; riboflavin biosynthesis; 5-amino-6-(D-ribitylamino)uracil from GTP: step 1/4. In terms of biological role, catalyzes the conversion of GTP to 2,5-diamino-6-ribosylamino-4(3H)-pyrimidinone 5'-phosphate (DARP), formate and pyrophosphate. This Blochmanniella pennsylvanica (strain BPEN) protein is GTP cyclohydrolase-2.